The primary structure comprises 942 residues: tRNAse Z TRZ4, mitochondrial (942 aa).

The transit peptide at 1-50 (MLTSSMPQNLSLFGFSPLKSSSFALILRPFSLYPPIFASSSPAPSRRPPR) directs the protein to the mitochondrion. The tract at residues 38 to 85 (ASSSPAPSRRPPRTAGYRRSGPSPPRRKWSSFEEQKRKGRSPMEKDKA) is disordered. Basic and acidic residues predominate over residues 67-85 (SSFEEQKRKGRSPMEKDKA).

The protein belongs to the RNase Z family. In terms of assembly, homodimer. The cofactor is Zn(2+). Ca(2+) serves as cofactor. Mn(2+) is required as a cofactor. Requires Mg(2+) as cofactor.

Its subcellular location is the mitochondrion. It carries out the reaction Endonucleolytic cleavage of RNA, removing extra 3' nucleotides from tRNA precursor, generating 3' termini of tRNAs. A 3'-hydroxy group is left at the tRNA terminus and a 5'-phosphoryl group is left at the trailer molecule.. Functionally, zinc phosphodiesterase, which displays tRNA 3'-processing endonuclease activity. Involved in tRNA maturation, by removing a 3'-trailer from precursor tRNA. Can process the mitochondrial tRNA-like structures (t-elements). The protein is tRNAse Z TRZ4, mitochondrial of Arabidopsis thaliana (Mouse-ear cress).